Consider the following 381-residue polypeptide: uncharacterized protein (381 aa).

Residues 331 to 340 (MQNGYANNGR) are compositionally biased toward polar residues. Positions 331–381 (MQNGYANNGRNHQRERFERPEKNSKKNKFLPFNGSNKEKKRDKLKKNCVIM) are disordered. The segment covering 342 to 354 (HQRERFERPEKNS) has biased composition (basic and acidic residues). Positions 372-381 (DKLKKNCVIM) are enriched in basic residues.

It localises to the cytoplasm. The protein localises to the nucleus. This is an uncharacterized protein from Saccharomyces cerevisiae (strain ATCC 204508 / S288c) (Baker's yeast).